A 370-amino-acid polypeptide reads, in one-letter code: Death-associated protein kinase 2 (370 aa).

The Protein kinase domain maps to 23–285 (YDIGEELGSG…IQEALRHPWI (263 aa)). Residues 29-37 (LGSGQFAIV) and lysine 52 each bind ATP. Residue aspartate 149 is the Proton acceptor of the active site. The calmodulin-binding stretch occupies residues 277–344 (QEALRHPWIT…KVHLRPDEDL (68 aa)). The segment at 292–301 (QAMVRRESVV) is autoinhibitory domain. Serine 299 carries the phosphoserine modification. Serine 318 carries the post-translational modification Phosphoserine; by autocatalysis. The interval 348–370 (ESDTEEDIARRKALHPRRRSSTS) is disordered. Residue serine 349 is modified to Phosphoserine. Residues 358 to 370 (RKALHPRRRSSTS) are compositionally biased toward basic residues. A Phosphothreonine; by PKB/AKT1 modification is found at threonine 369.

Belongs to the protein kinase superfamily. CAMK Ser/Thr protein kinase family. DAP kinase subfamily. As to quaternary structure, homodimer in its autoinhibited state. Active as monomer. Isoform 2 but not isoform 1 can interact with ATF4. Interacts with 14-3-3 proteins YWHAB, YWHAE, YWHAG, YWHAH, YWHAQ, YWHAZ and SFN; the interaction requires DAPK2 phosphorylation at Thr-369 and suppresses DAPK2 kinase activity and DAPK2-induced apoptosis. It depends on Mg(2+) as a cofactor. In terms of processing, autophosphorylation at Ser-318 inhibits its catalytic activity. Dephosphorylated at Ser-318 in response to activated Fas and TNF-alpha receptors. As to expression, expressed in neutrophils and eosinophils. Isoform 2 is expressed in embryonic stem cells (at protein level). Isoform 1 is ubiquitously expressed in all tissue types examined with high levels in heart, lung and skeletal muscle.

It is found in the cytoplasm. The protein resides in the cytoplasmic vesicle. It localises to the autophagosome lumen. The enzyme catalyses L-seryl-[protein] + ATP = O-phospho-L-seryl-[protein] + ADP + H(+). It carries out the reaction L-threonyl-[protein] + ATP = O-phospho-L-threonyl-[protein] + ADP + H(+). Activated by Ca(2+)/calmodulin. Regulated by a double locking mechanism, involving autophosphorylation at Ser-318, calmodulin binding, and dimerization. In the inactive state, Ser-318 is phosphorylated, and the kinase is dimeric. Activation involves: dephosphorylation at Ser-318, release-of-autoinhibition mechanism where calmodulin binding induces a conformational change that relieves the steric block of the active site by the autoinhibitory domain, and generation of the monomeric active form of the kinase. Its function is as follows. Calcium/calmodulin-dependent serine/threonine kinase involved in multiple cellular signaling pathways that trigger cell survival, apoptosis, and autophagy. Regulates both type I apoptotic and type II autophagic cell death signals, depending on the cellular setting. The former is caspase-dependent, while the latter is caspase-independent and is characterized by the accumulation of autophagic vesicles. Acts as a mediator of anoikis and a suppressor of beta-catenin-dependent anchorage-independent growth of malignant epithelial cells. May play a role in granulocytic maturation. Regulates granulocytic motility by controlling cell spreading and polarization. Isoform 2 is not regulated by calmodulin. It can phosphorylate MYL9. It can induce membrane blebbing and autophagic cell death. This chain is Death-associated protein kinase 2 (DAPK2), found in Homo sapiens (Human).